The chain runs to 277 residues: Elongation factor 1-delta (277 aa).

N-acetylalanine is present on A2. K17 carries the N6-acetyllysine modification. Phosphoserine occurs at positions 37, 44, 60, 86, and 106. N6-acetyllysine is present on K107. The segment at S113–A171 is disordered. Residue K117 is modified to N6-acetyllysine; alternate. An N6-succinyllysine; alternate modification is found at K117. S119 is modified (phosphoserine). A Phosphothreonine modification is found at T129. Position 133 is a phosphoserine (S133). T147 carries the post-translational modification Phosphothreonine. Positions T149 to K168 are enriched in acidic residues. At S162 the chain carries Phosphoserine; by CK2.

This sequence belongs to the EF-1-beta/EF-1-delta family. In terms of assembly, EF-1 is composed of 4 subunits: alpha, beta, delta, and gamma.

Its function is as follows. EF-1-beta and EF-1-delta stimulate the exchange of GDP bound to EF-1-alpha to GTP. The protein is Elongation factor 1-delta (EEF1D) of Ovis aries (Sheep).